Here is an 815-residue protein sequence, read N- to C-terminus: MRYDEAANFLLDLRRYGPKPGTESTADLLASLGDPHQDGPDYVQIAGSNGKGSTARFTESILRAAGLDVGLYTSPHFDDVRERVTVNGRRMSKAALTTFIETITPYVTERAADGAAPTYFEVVTAMALWQFSRADVDVAVLEVGIGGRLDATSVVDPSASAVTSVTLEHTDVLGETIPEIARDKAHVAPAGDTPLVTATTDDALAAVRDHAGAVRTVGDTAGRDVTATYEGRTNHTEAAVSITGDDWSVATEIPLLGDHQAENAGVAAALARQTAGVDDDAIARGLRSAHWPGRFEVMGADPVVVLDGAHNPGACGAVAETVAEFDYDRLLTVFGAMHDKDHGAMAAALPTPDHVWACEPVPDRAEDADVLAAVFEDAGAGTVSVTRAVESAVADAIAEATADDLVLVAGSLFAVAEARTRWTRTFAETDVDSLDDARDALERAHVTPPGVWRMRGKGVHRVVKTRVQTRQAQYLKEELLSLGGECSVSGLNAQSGAMVDAVMMATMAQFKRLCEKLDGQPYGLSEVGADLRESLGIQAAPATHGYPWEGERTAVMGILNVTPDSFHDGGEYDALEDAVARAESMAENGVDVIDIGGESTRPGADAVSVADELDRVLPVIERISDLDVLLSVDTRKAEVARQALEAGADILNDVTGLDDPEMRFVAAEYDAPIVVMHSIDAPVDPDSDPDYDDVVDDVIAELTERVLLAEKAGVPRERIIVDPGLGFGKSAAEGFELLDRADEFHALGGPVLVGHSHKSMFGAVDRYPDEGGYATAAASALAADRGADIVRVHDVPENVAAVRVAEATRTGADAE.

The folylpolyglutamate synthase stretch occupies residues Met1–Ala416. An ATP-binding site is contributed by Gly47–Ser53. Positions Thr553 to Arg803 constitute a Pterin-binding domain. The tract at residues Val555–Glu815 is DHPS. Asn560 contacts Mg(2+). (7,8-dihydropterin-6-yl)methyl diphosphate contacts are provided by residues Thr600, Asp633, Asn652, Asp722, Lys758, and Arg791–His793.

It in the N-terminal section; belongs to the folylpolyglutamate synthase family. In the C-terminal section; belongs to the DHPS family. Requires Mg(2+) as cofactor.

The enzyme catalyses (6S)-5,6,7,8-tetrahydrofolyl-(gamma-L-Glu)(n) + L-glutamate + ATP = (6S)-5,6,7,8-tetrahydrofolyl-(gamma-L-Glu)(n+1) + ADP + phosphate + H(+). The catalysed reaction is (7,8-dihydropterin-6-yl)methyl diphosphate + 4-aminobenzoate = 7,8-dihydropteroate + diphosphate. It participates in cofactor biosynthesis; tetrahydrofolylpolyglutamate biosynthesis. Its pathway is cofactor biosynthesis; tetrahydrofolate biosynthesis; 7,8-dihydrofolate from 2-amino-4-hydroxy-6-hydroxymethyl-7,8-dihydropteridine diphosphate and 4-aminobenzoate: step 1/2. Can complement an H.volcanii mutant strain that is thymidine auxotroph because it lacks the two dihydrofolate reductase genes encoded by hdrA and hdrB. The sequence is that of Probable bifunctional folylpolyglutamate synthase/dihydropteroate synthase (folP) from Halobacterium salinarum (strain ATCC 700922 / JCM 11081 / NRC-1) (Halobacterium halobium).